A 296-amino-acid chain; its full sequence is Chronophin (296 aa).

Asp-25 (nucleophile) is an active-site residue. The Mg(2+) site is built by Asp-25 and Asp-27. The active-site Proton donor is Asp-27. Residues 58–60 (SNN), His-182, and Lys-213 contribute to the substrate site. Asp-238 provides a ligand contact to Mg(2+).

It belongs to the HAD-like hydrolase superfamily. As to quaternary structure, homodimer. Mg(2+) serves as cofactor. As to expression, ubiquitously expressed (at protein level). Highly expressed in all the regions of central nerve system except the spinal cord. Also expressed at high level in liver and testis. In fetus, it is weakly expressed in all organs except brain.

It is found in the cytoplasm. The protein resides in the cytosol. The protein localises to the cytoskeleton. It localises to the cell projection. Its subcellular location is the ruffle membrane. It is found in the lamellipodium membrane. The protein resides in the cell membrane. The catalysed reaction is pyridoxal 5'-phosphate + H2O = pyridoxal + phosphate. It catalyses the reaction pyridoxine 5'-phosphate + H2O = pyridoxine + phosphate. It carries out the reaction pyridoxamine + phosphate = pyridoxamine 5'-phosphate + H2O. The enzyme catalyses O-phospho-L-seryl-[protein] + H2O = L-seryl-[protein] + phosphate. Its activity is regulated as follows. Inhibited by NaF, Zn(2+), Ca(2+), Mn(2+) and EDTA. Functionally, functions as a pyridoxal phosphate (PLP) phosphatase, which also catalyzes the dephosphorylation of pyridoxine 5'-phosphate (PNP) and pyridoxamine 5'-phosphate (PMP), with order of substrate preference PLP &gt; PNP &gt; PMP and therefore plays a role in vitamin B6 metabolism. Also functions as a protein serine phosphatase that specifically dephosphorylates 'Ser-3' in proteins of the actin-depolymerizing factor (ADF)/cofilin family like CFL1 and DSTN. Thereby, regulates cofilin-dependent actin cytoskeleton reorganization, being required for normal progress through mitosis and normal cytokinesis. Does not dephosphorylate phosphothreonines in LIMK1. Does not dephosphorylate peptides containing phosphotyrosine. This is Chronophin from Homo sapiens (Human).